We begin with the raw amino-acid sequence, 190 residues long: MELILGSQSSARANLLKEHGIKFEQKALYFDEESLKTTDPREFVYLACKGKLEKAKKLLTNHCVIVVADSVVSVDNRMQRKAKNKQEALEFLKRQNGNEIEVLTCSALISPVLEWLDLSVFRARLKAFDSSEIEKYLESGLWQESAGCVRLEDFHRPYIKSSSKNLSVGLGLNVEGLLGALKLGAKLSLL.

Catalysis depends on Asp69, which acts as the Proton acceptor.

This sequence belongs to the Maf family. Requires a divalent metal cation as cofactor.

Its subcellular location is the cytoplasm. The catalysed reaction is a ribonucleoside 5'-triphosphate + H2O = a ribonucleoside 5'-phosphate + diphosphate + H(+). The enzyme catalyses a 2'-deoxyribonucleoside 5'-triphosphate + H2O = a 2'-deoxyribonucleoside 5'-phosphate + diphosphate + H(+). Functionally, nucleoside triphosphate pyrophosphatase. May have a dual role in cell division arrest and in preventing the incorporation of modified nucleotides into cellular nucleic acids. The polypeptide is Nucleoside triphosphate pyrophosphatase (Helicobacter pylori (strain G27)).